Here is an 85-residue protein sequence, read N- to C-terminus: Transcriptional repressor protein KorC (85 aa).

The segment at residues 28–47 (VLHLAGLTGGQAARILGLGA) is a DNA-binding region (H-T-H motif).

In terms of biological role, acts with KorA as corepressor in the control of the kilC and kilE operons. This Escherichia coli protein is Transcriptional repressor protein KorC (korC).